Reading from the N-terminus, the 371-residue chain is Probable diguanylate cyclase DgcC (371 aa).

5 helical membrane-spanning segments follow: residues A46–P66, W68–A88, W112–L132, F143–I163, and P171–V191. In terms of domain architecture, GGDEF spans R240–A371. The Mg(2+) site is built by D248 and I249. The substrate site is built by N256 and D265. Residue D291 participates in Mg(2+) binding.

Mg(2+) is required as a cofactor.

Its subcellular location is the cell inner membrane. The catalysed reaction is 2 GTP = 3',3'-c-di-GMP + 2 diphosphate. The protein operates within purine metabolism; 3',5'-cyclic di-GMP biosynthesis. Functionally, a probable diguanylate cyclase. The last member of a cascade of expressed proteins, its expression requires DgcM. DgcC production induces biosynthesis of cellulose in some E.coli isolates, but not in K12 strains. Cyclic-di-GMP is a second messenger which controls cell surface-associated traits in bacteria. The sequence is that of Probable diguanylate cyclase DgcC from Escherichia coli (strain K12).